We begin with the raw amino-acid sequence, 248 residues long: Probable transcriptional regulatory protein Smed_2641 (248 aa).

This sequence belongs to the TACO1 family.

The protein localises to the cytoplasm. This chain is Probable transcriptional regulatory protein Smed_2641, found in Sinorhizobium medicae (strain WSM419) (Ensifer medicae).